The following is a 308-amino-acid chain: Homoserine O-succinyltransferase (308 aa).

Catalysis depends on C142, which acts as the Acyl-thioester intermediate. Substrate-binding residues include K163 and S192. Residue H235 is the Proton acceptor of the active site. E237 is an active-site residue. R249 provides a ligand contact to substrate.

The protein belongs to the MetA family.

It is found in the cytoplasm. The catalysed reaction is L-homoserine + succinyl-CoA = O-succinyl-L-homoserine + CoA. Its pathway is amino-acid biosynthesis; L-methionine biosynthesis via de novo pathway; O-succinyl-L-homoserine from L-homoserine: step 1/1. Transfers a succinyl group from succinyl-CoA to L-homoserine, forming succinyl-L-homoserine. The sequence is that of Homoserine O-succinyltransferase from Pseudoalteromonas atlantica (strain T6c / ATCC BAA-1087).